Consider the following 273-residue polypeptide: Peroxiredoxin-4 (273 aa).

A signal peptide spans 1 to 40 (METWSKLLDGTTPSRRWRKLVLLLPPLLLFLLQTEALQGL). The Thioredoxin domain occupies 81 to 239 (AKISKPAPYW…TLRLVQAFQY (159 aa)). Cys-126 acts as the Cysteine sulfenic acid (-SOH) intermediate in catalysis.

The protein belongs to the peroxiredoxin family. AhpC/Prx1 subfamily. As to quaternary structure, homodimer; disulfide-linked, upon oxidation. 5 homodimers assemble to form a ring-like decamer. In terms of processing, the enzyme can be inactivated by further oxidation of the cysteine sulfenic acid (C(P)-SOH) to sulphinic acid (C(P)-SO2H) and sulphonic acid (C(P)-SO3H) instead of its condensation to a disulfide bond.

The protein resides in the cytoplasm. Its subcellular location is the endoplasmic reticulum. The protein localises to the secreted. It carries out the reaction a hydroperoxide + [thioredoxin]-dithiol = an alcohol + [thioredoxin]-disulfide + H2O. Functionally, thiol-specific peroxidase that catalyzes the reduction of hydrogen peroxide and organic hydroperoxides to water and alcohols, respectively. Plays a role in cell protection against oxidative stress by detoxifying peroxides and as sensor of hydrogen peroxide-mediated signaling events. Regulates the activation of NF-kappa-B in the cytosol by a modulation of I-kappa-B-alpha phosphorylation. The sequence is that of Peroxiredoxin-4 (Prdx4) from Rattus norvegicus (Rat).